The chain runs to 59 residues: UPF0181 protein YoaH (59 aa).

It belongs to the UPF0181 family.

This chain is UPF0181 protein YoaH, found in Salmonella arizonae (strain ATCC BAA-731 / CDC346-86 / RSK2980).